The primary structure comprises 51 residues: MPSHKTFRIKKKLAKKMRQNRPIPYWIRMRTDNTIRYNAKRRHWRRTKLGF.

Belongs to the eukaryotic ribosomal protein eL39 family.

The sequence is that of Large ribosomal subunit protein eL39z (RPL39A) from Oryza sativa subsp. japonica (Rice).